Consider the following 277-residue polypeptide: Short chain dehydrogenase penD (277 aa).

The NADP(+) site is built by Ile-28, Asp-76, and Asn-105. Residues Ser-158 and Ser-159 each act as proton donor in the active site. 3 residues coordinate NADP(+): Tyr-173, Lys-177, and Thr-209. Tyr-173 functions as the Proton acceptor in the catalytic mechanism. Residue Lys-177 is the Lowers pKa of active site Tyr of the active site.

The protein belongs to the short-chain dehydrogenases/reductases (SDR) family.

The catalysed reaction is yaequinolone D + NADPH + H(+) = penigequinolone A + NADP(+) + H2O. It carries out the reaction yaequinolone D + NADPH + H(+) = penigequinolone B + NADP(+) + H2O. It functions in the pathway secondary metabolite biosynthesis. It participates in alkaloid biosynthesis. Its pathway is mycotoxin biosynthesis. Its function is as follows. Short chain dehydrogenase; part of the gene cluster that mediates the biosynthesis of penigequinolones, potent insecticidal alkaloids that contain a highly modified 10-carbon prenyl group. The first stage is catalyzed by the nonribosomal peptide synthetase penN that condenses anthranilic acid and O-methyl-L-tyrosine to produce 4'-methoxycyclopeptin. 4'-methoxycyclopeptin is then converted to 4'-methoxydehydrocyclopeptin by the ketoglutarate-dependent dioxygenase penM through dehydrogenation to form a double bond between C-alpha and C-beta of the O-methyltyrosine side chain. PenM also converts its first product methoxydehydrocyclopeptin to 4'-methoxycyclopenin. The following conversion of 4'methoxycyclopenin into 4'-methoxyviridicatin is catalyzed by the cyclopenase penL. 4'-methoxyviridicatin is the precursor of quinolone natural products, and is further converted to quinolinone B. The prenyltransferase penI then catalyzes the canonical Friedel-Crafts alkylation of quinolinone B with dimethylallyl cation to yield dimethylallyl quinolone, which is subjected to FAD-dependent dehydrogenation by the FAD-linked oxidoreductase penH to yield conjugated aryl diene. The delta(3') double bond then serves as the site of the second alkylation with DMAPP catalyzed by the prenyltransferase penG to yield a carbenium ion intermediate, which can be attacked by H(2)O to yield a styrenyl quinolone containing a C3'-hydroxyprenyl chain, or undergo cyclization to yield yaequinolones J1 and J2. The conversion of the styrenyl quinolone into the tetrahydrofuran-containing yaequinolone C is performed by the FAD-dependent monooxygenase penE and involves epoxidation of the terminal C7'-C8' olefin, followed by epoxide ring opening initiated by the C3' hydroxyl group. The predicted cysteine hydrolase penJ acts as an epoxide hydrolase that enhances the rate of the 5-exo-tet cyclization step, increasing the yield of yaequinolone C. PenF catalyzes the cationic rearrangement of the epoxide formed by penE (before ring opening to produce yaequinolone C) into yaequinolone D. Finally, the short-chain dehydrogenase/reductase (SDR)-like reductase penD, catalyzes both the dehydration of yaequinolone D and the reduction of the resulting oxonium to yield penigequinolone. The protein is Short chain dehydrogenase penD of Penicillium thymicola.